A 276-amino-acid polypeptide reads, in one-letter code: Energy-coupling factor transporter ATP-binding protein EcfA1 (276 aa).

In terms of domain architecture, ABC transporter spans 2–237 (IEIKNLKFKY…GSELVDLGLD (236 aa)). 37-44 (GHNGSGKS) contacts ATP.

It belongs to the ABC transporter superfamily. Energy-coupling factor EcfA family. As to quaternary structure, forms a stable energy-coupling factor (ECF) transporter complex composed of 2 membrane-embedded substrate-binding proteins (S component), 2 ATP-binding proteins (A component) and 2 transmembrane proteins (T component).

It is found in the cell membrane. Functionally, ATP-binding (A) component of a common energy-coupling factor (ECF) ABC-transporter complex. Unlike classic ABC transporters this ECF transporter provides the energy necessary to transport a number of different substrates. In Streptococcus thermophilus (strain ATCC BAA-491 / LMD-9), this protein is Energy-coupling factor transporter ATP-binding protein EcfA1.